The primary structure comprises 2364 residues: Cytotoxin-L (2364 aa).

The four-helical bundle stretch occupies residues 1-91 (MSLVNKAQLQ…EVLELKNNSL (91 aa)). Residues 96–468 (KNLHFIWIGG…APDVRSTINL (373 aa)) enclose the GT44 domain. The interval 96-468 (KNLHFIWIGG…APDVRSTINL (373 aa)) is glucosyltransferase region. Residues 101–103 (IWI), Asn139, 265–270 (LAAASD), and 286–288 (DVD) contribute to the UDP-alpha-D-glucose site. Mg(2+)-binding residues include Asp288, Glu515, and Ser518. Residue 518–520 (SLW) participates in UDP-alpha-D-glucose binding. Residues 544-799 (GEDDILDFSQ…KSKNLHELST (256 aa)) form an autoprocessing region region. 2 residues coordinate Zn(2+): Glu545 and Asp546. Positions 567–774 (SSSMRTPNKE…EESIIKDISS (208 aa)) constitute a Peptidase C80 domain. Tyr577, Lys600, and Lys647 together coordinate 1D-myo-inositol hexakisphosphate. His653 is a Zn(2+) binding site. The active-site For protease activity is the His653. Catalysis depends on Cys698, which acts as the Nucleophile; for protease activity. His757 is a Zn(2+) binding site. 1D-myo-inositol hexakisphosphate contacts are provided by Lys764, Lys775, and Lys792. The translocation region stretch occupies residues 800 to 1500 (LLQEIKNNSN…ESIIRNIYMP (701 aa)). Interaction with host SEMA6A and SEMA6B stretches follow at residues 1433 to 1438 (CIKLIE), 1466 to 1471 (DNETKY), 1484 to 1495 (FTAEFSNESIIR), 1504 to 1511 (NLFIYSSK), and 1596 to 1601 (YNNLDP). 19 Cell wall-binding repeats span residues 1833–1852 (VSGL…PKNN), 1854–1873 (ITGF…TKSG), 1876–1895 (SIGE…QGIL), 1926–1945 (FIGK…NYRA), 1946–1965 (AVEW…KTGE), 1967–1986 (LKGL…NGIM), 1987–2006 (QTGF…DGVM), 2007–2026 (QVGY…NGER), 2057–2076 (YNGI…SNTA), 2077–2097 (VVGW…NTAE), 2099–2118 (CIGL…NGIR), 2119–2138 (QLGF…SGKI), 2139–2158 (ELGY…SGLV), 2209–2224 (ETGW…YFDP), 2227–2249 (KKAY…NGIM), 2250–2269 (KTGL…DGKM), 2270–2289 (QFGY…DGKM), 2320–2339 (YTGW…EYIA), and 2340–2359 (ATSS…DTAE). Positions 1835-2364 (GLIYINDSLY…PDTAELVVSE (530 aa)) are receptor-binding (CROPS) region.

It belongs to the clostridial glucosylating toxin (LCGT) family. Homomultimer; forms an inactive homomultimer at pH 8, which dissociates at pH 4, leading to cytotoxicity. Interacts with host SEMA6A; interaction promotes toxin entry into host cell. Interacts with host SEMA6B; interaction promotes toxin entry into host cell. Requires Zn(2+) as cofactor. The cofactor is Mn(2+). It depends on Mg(2+) as a cofactor. Post-translationally, undergoes autocatalytic cleavage to release the N-terminal part (Glucosyltransferase TcsL), which constitutes the active part of the toxin, in the host cytosol. 1D-myo-inositol hexakisphosphate-binding (InsP6) activates the peptidase C80 domain and promotes autoprocessing.

The protein localises to the secreted. It localises to the host endosome membrane. It is found in the host cytoplasm. The protein resides in the host cytosol. Its subcellular location is the host cell membrane. The catalysed reaction is L-threonyl-[protein] + UDP-alpha-D-glucose = 3-O-(alpha-D-glucosyl)-L-threonyl-[protein] + UDP + H(+). With respect to regulation, protease activity is activated upon binding to 1D-myo-inositol hexakisphosphate (InsP6), which induces conformational reorganization. Precursor of a cytotoxin that targets the vascular endothelium, inducing an anti-inflammatory effect and resulting in lethal toxic shock syndrome. TcsL constitutes the main toxin that mediates the pathology of P.sordellii infection, an anaerobic Gram-positive bacterium found in soil and in the gastrointestinal and vaginal tracts of animals and humans; although the majority of carriers are asymptomatic, pathogenic P.sordellii infections arise rapidly and are highly lethal. This form constitutes the precursor of the toxin: it enters into host cells and mediates autoprocessing to release the active toxin (Glucosyltransferase TcsL) into the host cytosol. Targets vascular endothelium by binding to the semaphorin proteins SEMA6A and SEMA6B, and enters host cells via clathrin-mediated endocytosis. Once entered into host cells, acidification in the endosome promotes the membrane insertion of the translocation region and formation of a pore, leading to translocation of the GT44 and peptidase C80 domains across the endosomal membrane. This activates the peptidase C80 domain and autocatalytic processing, releasing the N-terminal part (Glucosyltransferase TcsL), which constitutes the active part of the toxin, in the cytosol. In terms of biological role, active form of the toxin, which is released into the host cytosol following autoprocessing and inactivates small GTPases. Acts by mediating monoglucosylation of small GTPases of the Ras (H-Ras/HRAS, K-Ras/KRAS and N-Ras/NRAS) family in host cells at the conserved threonine residue located in the switch I region ('Thr-37/35'), using UDP-alpha-D-glucose as the sugar donor. Does not catalyze monoglucosylation of Ral/RALA. Also able to catalyze monoglucosylation of some members of the Rho family (Rac1 and Rap2A), but with less efficiency than with Ras proteins. Monoglucosylation of host small GTPases completely prevents the recognition of the downstream effector, blocking the GTPases in their inactive form and leading to apoptosis. Induces an anti-inflammatory effect, mainly by inactivating Ras proteins which results in blockage of the cell cycle and killing of immune cells. The absence or moderate local inflammatory response allows C.sordellii spreading in deep tissues, production of toxin which is released in the general circulation and causes a toxic shock syndrome. The polypeptide is Cytotoxin-L (Paraclostridium sordellii (Clostridium sordellii)).